The primary structure comprises 732 residues: Segment polarity protein dishevelled homolog DVL-2 (732 aa).

The 82-residue stretch at M1–E82 folds into the DIX domain. Disordered stretches follow at residues S81–T181 and E195–S237. Positions D98–A111 are enriched in pro residues. Over residues M146 to T157 the composition is skewed to basic and acidic residues. A compositionally biased stretch (polar residues) spans R202–S213. Residues L215–P227 show a composition bias toward basic residues. One can recognise a PDZ domain in the interval T250–A335. The region spanning P424 to D498 is the DEP domain. Low complexity-rich tracts occupy residues M570–S589, K612–R629, and P637–P647. A disordered region spans residues M570–A660.

It belongs to the DSH family. In terms of assembly, can form homomultimers. Interacts with prickle1. Interacts (via the PDZ domain) with ccdc88c/dal and dact1-B/dpr. Interacts (via the DIX domain) with ARP/Axin-related protein and dact1-A/frodo. Interacts with sdc4, possibly via fz7. Interacts directly (via the DEP domain) with efnb1/ephrin-B1. May interact indirectly with the phosphorylated ephrin receptors ephb1 and ephb2 via SH domain-containing adapters. In terms of processing, phosphorylated. Phosphorylation is controlled by frizzled proteins, correlates with the onset of embryo dorsalizing events and is higher in the dorsal half of early cleavage embryos. Phosphorylated on tyrosine residues in response to association with efnb1/ephrin-B1.

The protein resides in the cytoplasm. The protein localises to the cytoplasmic vesicle. It is found in the cell projection. It localises to the cilium. Its subcellular location is the nucleus. The protein resides in the cell membrane. Its function is as follows. Involved in at least 2 independent signaling cascades, controlling cell fate via canonical Wnt signaling and cell polarity via a planar cell polarity (PCP) cascade. Acts synergistically with dal/dapple-like to activate Wnt signaling, stabilizing ctnnb1/beta-catenin and leading to dorsal axis formation. Also prevents degradation of ctnnb1/beta-catenin by displacing gsk3 from a complex with ARP/Axin-related protein. Has an additional role in anterior-posterior (A/P) axis formation, specifying different neuroectodermal cell fates along the A/P axis in a dose-dependent manner by activating several early patterning genes. In the PCP pathway, required at the cell membrane for PCP-mediated neural and mesodermal convergent extension during gastrulation and subsequent neural tube closure, acting to activate jnk. Also involved in blastopore closure and archenteron elongation during early, but not late, gastrulation. Associates with ephrin receptors and ligands and acts as part of a downstream PCP pathway to mediate ephrin-mediated cell repulsion via activation of rhoa. Required for efnb1/ephrin-B1-driven movement of non-retinal progenitor cells into the retina during eye field formation. Patterns the hindbrain. Required for ciliogenesis. Controls the docking of basal bodies to the apical plasma membrane; mediates the activation, but not localization of rhoa at the apical surface of ciliated cells during basal body docking. Furthermore, required for the association of basal bodies with membrane-bound vesicles and the vesicle-trafficking protein exoc4/sec8, and this association is in turn required for basal body docking. Once basal bodies are docked, required for the planar polarization of basal bodies that underlies ciliary beating and the directional fluid flow across ciliated epithelia. This Xenopus tropicalis (Western clawed frog) protein is Segment polarity protein dishevelled homolog DVL-2.